The sequence spans 376 residues: Chaperone protein DnaJ (376 aa).

The J domain occupies 5–70 (DYYEVLGVAK…QKRAAYDQYG (66 aa)). Residues 136 to 214 (GYDTQIRVPS…CHGSGKVKET (79 aa)) form a CR-type zinc finger. Zn(2+) is bound by residues C149, C152, C166, C169, C188, C191, C202, and C205. 4 CXXCXGXG motif repeats span residues 149–156 (CEVCHGSG), 166–173 (CPTCHGQG), 188–195 (CPKCHGTG), and 202–209 (CAHCHGSG).

Belongs to the DnaJ family. In terms of assembly, homodimer. The cofactor is Zn(2+).

It localises to the cytoplasm. In terms of biological role, participates actively in the response to hyperosmotic and heat shock by preventing the aggregation of stress-denatured proteins and by disaggregating proteins, also in an autonomous, DnaK-independent fashion. Unfolded proteins bind initially to DnaJ; upon interaction with the DnaJ-bound protein, DnaK hydrolyzes its bound ATP, resulting in the formation of a stable complex. GrpE releases ADP from DnaK; ATP binding to DnaK triggers the release of the substrate protein, thus completing the reaction cycle. Several rounds of ATP-dependent interactions between DnaJ, DnaK and GrpE are required for fully efficient folding. Also involved, together with DnaK and GrpE, in the DNA replication of plasmids through activation of initiation proteins. The polypeptide is Chaperone protein DnaJ (Burkholderia multivorans (strain ATCC 17616 / 249)).